We begin with the raw amino-acid sequence, 368 residues long: MRTLHVDLGERSYPIYIGENLLGDARWFAPHIVGRRVAVISNETVAPLYLETLLKALQGHEVTPVVLPDGEAYKQWETLQLIFDALLKERHDRKTTLIALGGGVIGDMAGFAAACYQRGVNFIQVPTTLLSQVDSSVGGKTGINHPLGKNMIGAFYQPQAVVIDTASLKTLPSRELSAGLAEVIKYGFICDEPFITWLEEHMDALLALEPTVVTEAIERSCAAKARVVGADERESGVRATLNLGHTFGHAIETQQGYGVWLHGEAVGAGTVMALEMSHRLGWLSAAERDRGIRLLRRAGLPVVPPAEMTAEDFMEHMAVDKKVLDGRLRLVLLQGLGNAVVTGDFPREILDATLRTDYRALADQLGDE.

NAD(+) is bound by residues 69–74 (DGEAYK), 103–107 (GVIGD), 127–128 (TT), lysine 140, and lysine 149. Positions 182, 245, and 262 each coordinate Zn(2+).

Belongs to the sugar phosphate cyclases superfamily. Dehydroquinate synthase family. It depends on Co(2+) as a cofactor. Requires Zn(2+) as cofactor. NAD(+) is required as a cofactor.

The protein resides in the cytoplasm. The catalysed reaction is 7-phospho-2-dehydro-3-deoxy-D-arabino-heptonate = 3-dehydroquinate + phosphate. It participates in metabolic intermediate biosynthesis; chorismate biosynthesis; chorismate from D-erythrose 4-phosphate and phosphoenolpyruvate: step 2/7. Its function is as follows. Catalyzes the conversion of 3-deoxy-D-arabino-heptulosonate 7-phosphate (DAHP) to dehydroquinate (DHQ). The polypeptide is 3-dehydroquinate synthase (Pseudomonas aeruginosa (strain UCBPP-PA14)).